The chain runs to 117 residues: UPF0145 protein CV_4322 (117 aa).

This sequence belongs to the UPF0145 family.

This chain is UPF0145 protein CV_4322, found in Chromobacterium violaceum (strain ATCC 12472 / DSM 30191 / JCM 1249 / CCUG 213 / NBRC 12614 / NCIMB 9131 / NCTC 9757 / MK).